The primary structure comprises 688 residues: DNA ligase (688 aa).

NAD(+) contacts are provided by residues 51–55 (DSEYD), 100–101 (SL), and E129. The active-site N6-AMP-lysine intermediate is the K131. NAD(+)-binding residues include R152, E189, K308, and K332. The Zn(2+) site is built by C426, C429, C444, and C450. One can recognise a BRCT domain in the interval 609 to 688 (ADEQPLKGQT…DELLALLANS (80 aa)).

The protein belongs to the NAD-dependent DNA ligase family. LigA subfamily. Requires Mg(2+) as cofactor. Mn(2+) serves as cofactor.

It carries out the reaction NAD(+) + (deoxyribonucleotide)n-3'-hydroxyl + 5'-phospho-(deoxyribonucleotide)m = (deoxyribonucleotide)n+m + AMP + beta-nicotinamide D-nucleotide.. Functionally, DNA ligase that catalyzes the formation of phosphodiester linkages between 5'-phosphoryl and 3'-hydroxyl groups in double-stranded DNA using NAD as a coenzyme and as the energy source for the reaction. It is essential for DNA replication and repair of damaged DNA. This is DNA ligase from Shewanella sp. (strain MR-4).